Reading from the N-terminus, the 434-residue chain is Serine--tRNA ligase (434 aa).

241-243 (TAE) contributes to the L-serine binding site. Residue 272–274 (RSE) participates in ATP binding. L-serine is bound at residue Glu-295. 359–362 (EISS) contacts ATP. Ser-395 serves as a coordination point for L-serine.

This sequence belongs to the class-II aminoacyl-tRNA synthetase family. Type-1 seryl-tRNA synthetase subfamily. In terms of assembly, homodimer. The tRNA molecule binds across the dimer.

The protein localises to the cytoplasm. The catalysed reaction is tRNA(Ser) + L-serine + ATP = L-seryl-tRNA(Ser) + AMP + diphosphate + H(+). It carries out the reaction tRNA(Sec) + L-serine + ATP = L-seryl-tRNA(Sec) + AMP + diphosphate + H(+). It participates in aminoacyl-tRNA biosynthesis; selenocysteinyl-tRNA(Sec) biosynthesis; L-seryl-tRNA(Sec) from L-serine and tRNA(Sec): step 1/1. Catalyzes the attachment of serine to tRNA(Ser). Is also able to aminoacylate tRNA(Sec) with serine, to form the misacylated tRNA L-seryl-tRNA(Sec), which will be further converted into selenocysteinyl-tRNA(Sec). The sequence is that of Serine--tRNA ligase from Glaesserella parasuis serovar 5 (strain SH0165) (Haemophilus parasuis).